We begin with the raw amino-acid sequence, 145 residues long: Basic phospholipase A2 S11-61 (145 aa).

The N-terminal stretch at Met-1–Ala-19 is a signal peptide. Residues Ser-20–Leu-27 constitute a propeptide that is removed on maturation. Cystine bridges form between Cys-38-Cys-98, Cys-54-Cys-144, Cys-56-Cys-72, Cys-71-Cys-125, Cys-78-Cys-118, Cys-87-Cys-111, and Cys-105-Cys-116. Ca(2+)-binding residues include Tyr-55, Gly-57, and Gly-59. Residue His-75 is part of the active site. Asp-76 lines the Ca(2+) pocket. Residue Asp-119 is part of the active site.

The protein belongs to the phospholipase A2 family. Group I subfamily. D49 sub-subfamily. Ca(2+) is required as a cofactor. In terms of tissue distribution, expressed by the venom gland.

The protein localises to the secreted. It catalyses the reaction a 1,2-diacyl-sn-glycero-3-phosphocholine + H2O = a 1-acyl-sn-glycero-3-phosphocholine + a fatty acid + H(+). Functionally, snake venom phospholipase A2 (PLA2) that inhibits collagen-induced platelet aggregation. PLA2 catalyzes the calcium-dependent hydrolysis of the 2-acyl groups in 3-sn-phosphoglycerides. This is Basic phospholipase A2 S11-61 from Austrelaps superbus (Lowland copperhead snake).